The primary structure comprises 288 residues: Large ribosomal subunit protein uL2 (288 aa).

Positions 29–43 (PEKSLTRGFKRDKGR) are enriched in basic and acidic residues. Disordered stretches follow at residues 29–59 (PEKS…GGHK) and 210–288 (GRNR…GRQS). Basic residues-rich tracts occupy residues 210 to 221 (GRNRWKGRRPKV) and 272 to 288 (VRRR…GRQS).

It belongs to the universal ribosomal protein uL2 family. Part of the 50S ribosomal subunit. Forms a bridge to the 30S subunit in the 70S ribosome.

In terms of biological role, one of the primary rRNA binding proteins. Required for association of the 30S and 50S subunits to form the 70S ribosome, for tRNA binding and peptide bond formation. It has been suggested to have peptidyltransferase activity; this is somewhat controversial. Makes several contacts with the 16S rRNA in the 70S ribosome. The protein is Large ribosomal subunit protein uL2 of Thermosynechococcus vestitus (strain NIES-2133 / IAM M-273 / BP-1).